The following is a 407-amino-acid chain: MKSFFKPVIIKKFLWTLFFLFIYVLGTKLTLPFVDMSKAAAMDGTSTTLNYATALMGGNLRSMSLFSVGLSPWMSSMLIWQMFAVSKRLGLSKLPLEVQERRRMLLTLVIALIQSVALVLNLPLQEAAGVDMTTIMVLDTLVLMAGTYFLIWLTDLNAAMGLGGSIMIVMASMIAYIPQDIWNSIQELKISSLWLALMLVFSLVFLYLAVTVERSKYRIPVNKINIHNRFKKYSYLDIRLNPAGGMPIMYAMTLVSIPQYFLLIIHFLQPENQLIEQWIEALSMGSPAWFILYLLTIFILALAFAFINISGDQIAERMQKSGEYIENVYPGGATRRYINGLVTYFALVGAFYLILISGLPMMVVLVDIRYLRLSMIPGIFMIFIGMVFSIKDEVEALTLNDRYRSLL.

10 helical membrane passes run 13 to 33 (FLWTLFFLFIYVLGTKLTLPF), 65 to 85 (LFSVGLSPWMSSMLIWQMFAV), 104 to 124 (MLLTLVIALIQSVALVLNLPL), 133 to 153 (TTIMVLDTLVLMAGTYFLIWL), 158 to 178 (AAMGLGGSIMIVMASMIAYIP), 190 to 210 (ISSLWLALMLVFSLVFLYLAV), 248 to 268 (IMYAMTLVSIPQYFLLIIHFL), 287 to 307 (PAWFILYLLTIFILALAFAFI), 345 to 365 (FALVGAFYLILISGLPMMVVL), and 370 to 390 (YLRLSMIPGIFMIFIGMVFSI).

It belongs to the SecY/SEC61-alpha family. SecY2 subfamily. As to quaternary structure, component of the accessory SecA2/SecY2 protein translocase complex required to export cell wall proteins. May form heterotrimers with SecE and SecG subunits.

The protein localises to the cell membrane. Functionally, part of the accessory SecA2/SecY2 system specifically required for export of possible cell wall proteins. The central subunit of a protein translocation channel. The polypeptide is Accessory Sec system protein translocase subunit SecY2 (Streptococcus sanguinis (strain SK36)).